The sequence spans 107 residues: Phosphoribosyl-ATP pyrophosphatase (107 aa).

The protein belongs to the PRA-PH family.

It localises to the cytoplasm. It catalyses the reaction 1-(5-phospho-beta-D-ribosyl)-ATP + H2O = 1-(5-phospho-beta-D-ribosyl)-5'-AMP + diphosphate + H(+). It participates in amino-acid biosynthesis; L-histidine biosynthesis; L-histidine from 5-phospho-alpha-D-ribose 1-diphosphate: step 2/9. This chain is Phosphoribosyl-ATP pyrophosphatase, found in Bacillus cereus (strain Q1).